We begin with the raw amino-acid sequence, 542 residues long: CTP synthase (542 aa).

Positions 1 to 265 (MTKYIFVTGG…LKPISKELSL (265 aa)) are amidoligase domain. CTP is bound at residue serine 13. Serine 13 lines the UTP pocket. ATP contacts are provided by residues 14–19 (SLGKGI) and aspartate 71. 2 residues coordinate Mg(2+): aspartate 71 and glutamate 139. CTP contacts are provided by residues 146–148 (DIE), 186–191 (KSKPTQ), and lysine 222. UTP is bound by residues 186–191 (KSKPTQ) and lysine 222. In terms of domain architecture, Glutamine amidotransferase type-1 spans 290-541 (VLGFVGKYLE…VEATLAISQE (252 aa)). Glycine 352 is an L-glutamine binding site. Cysteine 379 (nucleophile; for glutamine hydrolysis) is an active-site residue. L-glutamine is bound by residues 380-383 (LGMQ), glutamate 403, and arginine 471. Active-site residues include histidine 514 and glutamate 516.

Belongs to the CTP synthase family. As to quaternary structure, homotetramer.

It catalyses the reaction UTP + L-glutamine + ATP + H2O = CTP + L-glutamate + ADP + phosphate + 2 H(+). The enzyme catalyses L-glutamine + H2O = L-glutamate + NH4(+). The catalysed reaction is UTP + NH4(+) + ATP = CTP + ADP + phosphate + 2 H(+). It participates in pyrimidine metabolism; CTP biosynthesis via de novo pathway; CTP from UDP: step 2/2. Its activity is regulated as follows. Allosterically activated by GTP, when glutamine is the substrate; GTP has no effect on the reaction when ammonia is the substrate. The allosteric effector GTP functions by stabilizing the protein conformation that binds the tetrahedral intermediate(s) formed during glutamine hydrolysis. Inhibited by the product CTP, via allosteric rather than competitive inhibition. Its function is as follows. Catalyzes the ATP-dependent amination of UTP to CTP with either L-glutamine or ammonia as the source of nitrogen. Regulates intracellular CTP levels through interactions with the four ribonucleotide triphosphates. This chain is CTP synthase, found in Sulfurimonas denitrificans (strain ATCC 33889 / DSM 1251) (Thiomicrospira denitrificans (strain ATCC 33889 / DSM 1251)).